We begin with the raw amino-acid sequence, 308 residues long: Ankyrin repeat and SOCS box protein 12 (308 aa).

ANK repeat units follow at residues 63–92, 96–125, 129–158, 171–200, and 213–243; these read IPGTPLRLAASYGHLNCVKVLLEHGADVDS, KAQTPLFTAVSHGHLECVRMLLEAGACPSG, NNCSPVLTASRDGAFAILQELLGHGAEANV, SCSGPLYLAAVYGHLDCFRLLLLYGADPDY, and QPRTLLEICLHHNCEPEYIQLLIDFGANIYL. One can recognise an SOCS box domain in the interval 268–308; it reads PRSLLSQTRLVIRRSLCRANQSQATDQLDIPPVLISYLKHQ.

It belongs to the ankyrin SOCS box (ASB) family. In terms of assembly, interacts with CUL5 and RNF7.

Its pathway is protein modification; protein ubiquitination. In terms of biological role, probable substrate-recognition component of a SCF-like ECS (Elongin-Cullin-SOCS-box protein) E3 ubiquitin-protein ligase complex which mediates the ubiquitination and subsequent proteasomal degradation of target proteins. This Mus musculus (Mouse) protein is Ankyrin repeat and SOCS box protein 12 (Asb12).